A 129-amino-acid polypeptide reads, in one-letter code: Large ribosomal subunit protein bL21 (129 aa).

A disordered region spans residues D100–E129.

The protein belongs to the bacterial ribosomal protein bL21 family. In terms of assembly, part of the 50S ribosomal subunit. Contacts protein L20.

This protein binds to 23S rRNA in the presence of protein L20. The sequence is that of Large ribosomal subunit protein bL21 from Brucella anthropi (strain ATCC 49188 / DSM 6882 / CCUG 24695 / JCM 21032 / LMG 3331 / NBRC 15819 / NCTC 12168 / Alc 37) (Ochrobactrum anthropi).